A 440-amino-acid polypeptide reads, in one-letter code: Adenylyltransferase and sulfurtransferase UBA4 (440 aa).

An N-acetylmethionine modification is found at Met1. ATP contacts are provided by residues Gly77, Asp98, 105–109 (SNLHR), Lys122, and 166–167 (DS). Positions 208 and 211 each coordinate Zn(2+). The active-site Glycyl thioester intermediate; for adenylyltransferase activity is Cys225. Residues Cys286 and Cys289 each contribute to the Zn(2+) site. Ser326 carries the post-translational modification Phosphoserine. Residues 339–438 (FLAKHIFLDV…YIDDIDQTIP (100 aa)) enclose the Rhodanese domain. Catalysis depends on Cys397, which acts as the Cysteine persulfide intermediate; for sulfurtransferase activity.

In the N-terminal section; belongs to the HesA/MoeB/ThiF family. UBA4 subfamily. It depends on Zn(2+) as a cofactor.

The protein localises to the cytoplasm. Its subcellular location is the cytosol. It participates in tRNA modification; 5-methoxycarbonylmethyl-2-thiouridine-tRNA biosynthesis. Functionally, plays a central role in 2-thiolation of mcm(5)S(2)U at tRNA wobble positions of cytosolic tRNA(Lys), tRNA(Glu) and tRNA(Gln). Acts by mediating the C-terminal thiocarboxylation of sulfur carrier URM1. Its N-terminus first activates URM1 as acyl-adenylate (-COAMP), then the persulfide sulfur on the catalytic cysteine is transferred to URM1 to form thiocarboxylation (-COSH) of its C-terminus. The reaction probably involves hydrogen sulfide that is generated from the persulfide intermediate and that acts as a nucleophile towards URM1. Subsequently, a transient disulfide bond is formed. Does not use thiosulfate as sulfur donor; NFS1 probably acting as a sulfur donor for thiocarboxylation reactions. Prior mcm(5) tRNA modification by the elongator complex is required for 2-thiolation. May also be involved in protein urmylation. The protein is Adenylyltransferase and sulfurtransferase UBA4 of Saccharomyces cerevisiae (strain YJM789) (Baker's yeast).